The following is a 336-amino-acid chain: Heme A synthase (336 aa).

Helical transmembrane passes span 12 to 32, 97 to 117, 130 to 150, 161 to 181, 194 to 214, 256 to 276, 285 to 305, and 310 to 330; these read LKLWLITLFSLIVLMVAVGGL, LLARFVGLFTLVPLLFFTLYF, IFFLVCLQGFIGWYMVSSGLI, SIHLSLALFILCLIFWYILDI, LFLLFILKLIVLQIVLGAFLS, FLHRSTAYLLLFFIIILNFIY, YVLFFDVAILFQIFLGIITLI, and ITYASLHQLGSILVLSSYFLI. His258 serves as a coordination point for heme. His316 lines the heme pocket.

It belongs to the COX15/CtaA family. Type 2 subfamily. In terms of assembly, interacts with CtaB. It depends on heme b as a cofactor.

The protein localises to the cell membrane. The catalysed reaction is Fe(II)-heme o + 2 A + H2O = Fe(II)-heme a + 2 AH2. It participates in porphyrin-containing compound metabolism; heme A biosynthesis; heme A from heme O: step 1/1. Catalyzes the conversion of heme O to heme A by two successive hydroxylations of the methyl group at C8. The first hydroxylation forms heme I, the second hydroxylation results in an unstable dihydroxymethyl group, which spontaneously dehydrates, resulting in the formyl group of heme A. This is Heme A synthase from Pelagibacter ubique (strain HTCC1062).